The sequence spans 307 residues: Ninja-family protein 5 (307 aa).

Disordered regions lie at residues 1-159 (MASR…EHTV) and 173-208 (TAGS…EPQP). Positions 8–30 (GGFGRDGGQAPVGGAGAAPGPGG) are enriched in gly residues. 2 stretches are compositionally biased toward polar residues: residues 63–83 (QRSS…GTSC) and 173–183 (TAGSPTPSRPQ).

This sequence belongs to the Ninja family.

The protein resides in the nucleus. The chain is Ninja-family protein 5 from Zea mays (Maize).